The primary structure comprises 164 residues: Phosphopantetheine adenylyltransferase (164 aa).

Residue Ser9 coordinates substrate. Residues 9–10 (SF) and His17 contribute to the ATP site. Substrate-binding residues include Lys41, Leu73, and Lys87. ATP contacts are provided by residues 88-90 (GLR), Glu98, and 123-129 (YSYLSSS).

Belongs to the bacterial CoaD family. As to quaternary structure, homohexamer. The cofactor is Mg(2+).

It localises to the cytoplasm. It catalyses the reaction (R)-4'-phosphopantetheine + ATP + H(+) = 3'-dephospho-CoA + diphosphate. The protein operates within cofactor biosynthesis; coenzyme A biosynthesis; CoA from (R)-pantothenate: step 4/5. Functionally, reversibly transfers an adenylyl group from ATP to 4'-phosphopantetheine, yielding dephospho-CoA (dPCoA) and pyrophosphate. This chain is Phosphopantetheine adenylyltransferase, found in Clostridium botulinum (strain ATCC 19397 / Type A).